The chain runs to 375 residues: 23S rRNA (uracil(747)-C(5))-methyltransferase RlmC (375 aa).

[4Fe-4S] cluster contacts are provided by C3, C11, C14, and C87. Residues Q212, F241, E262, and N307 each coordinate S-adenosyl-L-methionine. The active-site Nucleophile is the C334.

This sequence belongs to the class I-like SAM-binding methyltransferase superfamily. RNA M5U methyltransferase family. RlmC subfamily.

The catalysed reaction is uridine(747) in 23S rRNA + S-adenosyl-L-methionine = 5-methyluridine(747) in 23S rRNA + S-adenosyl-L-homocysteine + H(+). In terms of biological role, catalyzes the formation of 5-methyl-uridine at position 747 (m5U747) in 23S rRNA. In Yersinia enterocolitica serotype O:8 / biotype 1B (strain NCTC 13174 / 8081), this protein is 23S rRNA (uracil(747)-C(5))-methyltransferase RlmC.